Reading from the N-terminus, the 172-residue chain is Adenine phosphoribosyltransferase (172 aa).

This sequence belongs to the purine/pyrimidine phosphoribosyltransferase family. In terms of assembly, homodimer.

The protein localises to the cytoplasm. The catalysed reaction is AMP + diphosphate = 5-phospho-alpha-D-ribose 1-diphosphate + adenine. Its pathway is purine metabolism; AMP biosynthesis via salvage pathway; AMP from adenine: step 1/1. In terms of biological role, catalyzes a salvage reaction resulting in the formation of AMP, that is energically less costly than de novo synthesis. This is Adenine phosphoribosyltransferase from Polynucleobacter asymbioticus (strain DSM 18221 / CIP 109841 / QLW-P1DMWA-1) (Polynucleobacter necessarius subsp. asymbioticus).